The primary structure comprises 537 residues: O-phosphoserine--tRNA(Cys) ligase (537 aa).

Substrate is bound by residues 186-188 (HMT), 231-233 (SAS), 273-274 (YY), and Asn317.

It belongs to the class-II aminoacyl-tRNA synthetase family. O-phosphoseryl-tRNA(Cys) synthetase subfamily. Homotetramer. Interacts with SepCysS.

The catalysed reaction is tRNA(Cys) + O-phospho-L-serine + ATP = O-phospho-L-seryl-tRNA(Cys) + AMP + diphosphate. Catalyzes the attachment of O-phosphoserine (Sep) to tRNA(Cys). This is O-phosphoserine--tRNA(Cys) ligase from Methanococcus maripaludis (strain C5 / ATCC BAA-1333).